Consider the following 324-residue polypeptide: ATP phosphoribosyltransferase regulatory subunit (324 aa).

This sequence belongs to the class-II aminoacyl-tRNA synthetase family. HisZ subfamily. In terms of assembly, heteromultimer composed of HisG and HisZ subunits.

It localises to the cytoplasm. Its pathway is amino-acid biosynthesis; L-histidine biosynthesis; L-histidine from 5-phospho-alpha-D-ribose 1-diphosphate: step 1/9. Its function is as follows. Required for the first step of histidine biosynthesis. May allow the feedback regulation of ATP phosphoribosyltransferase activity by histidine. This Carboxydothermus hydrogenoformans (strain ATCC BAA-161 / DSM 6008 / Z-2901) protein is ATP phosphoribosyltransferase regulatory subunit.